Consider the following 615-residue polypeptide: UvrABC system protein C (615 aa).

A GIY-YIG domain is found at 14–91; that stretch reads TSPGCYIHKD…IKENKPKYNI (78 aa). The 36-residue stretch at 196–231 folds into the UVR domain; that stretch reads NKIIDELKGKMAAAAQTMEFERAAEYRDLIQAIGTL.

This sequence belongs to the UvrC family. In terms of assembly, interacts with UvrB in an incision complex.

It localises to the cytoplasm. Its function is as follows. The UvrABC repair system catalyzes the recognition and processing of DNA lesions. UvrC both incises the 5' and 3' sides of the lesion. The N-terminal half is responsible for the 3' incision and the C-terminal half is responsible for the 5' incision. The polypeptide is UvrABC system protein C (Streptococcus pneumoniae serotype 19F (strain G54)).